We begin with the raw amino-acid sequence, 177 residues long: Preprotein translocase subunit SECE1 (177 aa).

A chloroplast-targeting transit peptide spans 1 to 38 (MSLTAQFSPPVTGITRSLRDTKPSLSNLRVFPVYTEIR). Residues 60 to 87 (RDTAGSESESEATPSPAEESGSGEDKEV) are disordered. Positions 64–79 (GSESESEATPSPAEES) are enriched in low complexity. The helical transmembrane segment at 140–160 (VVLGVIAGSSVVLLTVNFLLA) threads the bilayer.

It belongs to the SecE/SEC61-gamma family. In terms of assembly, part of the Sec protein translocation apparatus. Interacts with SCY1 and ALB3.

The protein localises to the plastid. Its subcellular location is the chloroplast thylakoid membrane. In terms of biological role, involved in the import/insertion pathway in the thylakoids. The signal recognition particle is not involved in the insertion of SECE1 in the thylakoid membrane. This Arabidopsis thaliana (Mouse-ear cress) protein is Preprotein translocase subunit SECE1 (SECE1).